The sequence spans 433 residues: Pectinesterase B (433 aa).

Residues 1-21 (MSLTHYSGLAAAVSMSLILTA) form the signal peptide. Cysteine 22 carries the N-palmitoyl cysteine lipid modification. A lipid anchor (S-diacylglycerol cysteine) is attached at cysteine 22. Topologically, residues 22–433 (CGGQTPNSAR…EYNTQVLLHE (412 aa)) are periplasmic. The substrate site is built by threonine 202 and glutamine 236. Aspartate 259 (proton donor) is an active-site residue. The active-site Nucleophile is aspartate 292. Positions 356 and 358 each coordinate substrate.

Belongs to the pectinesterase family.

It is found in the cell outer membrane. It catalyses the reaction [(1-&gt;4)-alpha-D-galacturonosyl methyl ester](n) + n H2O = [(1-&gt;4)-alpha-D-galacturonosyl](n) + n methanol + n H(+). The protein operates within glycan metabolism; pectin degradation; 2-dehydro-3-deoxy-D-gluconate from pectin: step 1/5. Functionally, probably involved in the degradation of methylated oligogalacturonides present in the periplasm. More active on methylated oligogalacturides than on pectin. In Dickeya dadantii (strain 3937) (Erwinia chrysanthemi (strain 3937)), this protein is Pectinesterase B.